A 241-amino-acid polypeptide reads, in one-letter code: Fas-associated death domain protein (241 aa).

Residues 1–101 (MPGNHWYDIL…VNIYQEERLA (101 aa)) form a death-inducing region. Residues 151-237 (RKRTAVFNKI…RNDIKRKVEQ (87 aa)) form the Death domain.

As to quaternary structure, N-terminus interacts with Dredd. Interacts with imd.

The protein resides in the cytoplasm. Component of the IMD signaling pathway and is required for the host defense against Gram-negative bacteria. Interacts with Dredd, promotes cleavage of Dredd and is necessary and sufficient for enhancing Dredd-induced apoptosis. The chain is Fas-associated death domain protein (Fadd) from Drosophila pseudoobscura pseudoobscura (Fruit fly).